The following is a 99-amino-acid chain: Large ribosomal subunit protein uL23 (99 aa).

It belongs to the universal ribosomal protein uL23 family. In terms of assembly, part of the 50S ribosomal subunit. Contacts protein L29, and trigger factor when it is bound to the ribosome.

Its function is as follows. One of the early assembly proteins it binds 23S rRNA. One of the proteins that surrounds the polypeptide exit tunnel on the outside of the ribosome. Forms the main docking site for trigger factor binding to the ribosome. The sequence is that of Large ribosomal subunit protein uL23 from Saccharopolyspora erythraea (strain ATCC 11635 / DSM 40517 / JCM 4748 / NBRC 13426 / NCIMB 8594 / NRRL 2338).